A 478-amino-acid chain; its full sequence is tRNA modification GTPase MnmE (478 aa).

(6S)-5-formyl-5,6,7,8-tetrahydrofolate is bound by residues Arg-36, Glu-94, and Lys-133. Residues 230–402 enclose the TrmE-type G domain; that stretch reads GIHVVLAGRP…LVETLCAKVG (173 aa). Asn-240 is a K(+) binding site. Residues 240–245, 259–265, and 284–287 each bind GTP; these read NAGKSS, TDVAGTT, and DTAG. Position 244 (Ser-244) interacts with Mg(2+). Positions 259, 261, and 264 each coordinate K(+). Thr-265 lines the Mg(2+) pocket. Lys-478 is a (6S)-5-formyl-5,6,7,8-tetrahydrofolate binding site.

Belongs to the TRAFAC class TrmE-Era-EngA-EngB-Septin-like GTPase superfamily. TrmE GTPase family. Homodimer. Heterotetramer of two MnmE and two MnmG subunits. K(+) serves as cofactor.

It is found in the cytoplasm. In terms of biological role, exhibits a very high intrinsic GTPase hydrolysis rate. Involved in the addition of a carboxymethylaminomethyl (cmnm) group at the wobble position (U34) of certain tRNAs, forming tRNA-cmnm(5)s(2)U34. The sequence is that of tRNA modification GTPase MnmE from Psychrobacter cryohalolentis (strain ATCC BAA-1226 / DSM 17306 / VKM B-2378 / K5).